Here is a 716-residue protein sequence, read N- to C-terminus: ATP-dependent DNA helicase DinG (716 aa).

Residues 17–294 (ALQEQIPDFI…TCMEQFRPKT (278 aa)) form the Helicase ATP-binding domain. 54–61 (APTGVGKT) contributes to the ATP binding site. Cysteine 120 contacts [4Fe-4S] cluster. Positions 131–134 (EPTQ) match the DEAH box motif. [4Fe-4S] cluster contacts are provided by cysteine 194, cysteine 199, and cysteine 205. The short motif at 248-251 (DEGH) is the DEAH box element. In terms of domain architecture, Helicase C-terminal spans 517–698 (HIAEMAAFFR…VFPIEQPEVP (182 aa)).

The protein belongs to the helicase family. DinG subfamily. Type 1 sub-subfamily. It depends on [4Fe-4S] cluster as a cofactor.

The catalysed reaction is Couples ATP hydrolysis with the unwinding of duplex DNA at the replication fork by translocating in the 5'-3' direction. This creates two antiparallel DNA single strands (ssDNA). The leading ssDNA polymer is the template for DNA polymerase III holoenzyme which synthesizes a continuous strand.. The enzyme catalyses ATP + H2O = ADP + phosphate + H(+). DNA-dependent ATPase and 5'-3' DNA helicase. Unwinds D-loops, R-loops, forked DNA and G-quadruplex DNA. In Escherichia coli O6:H1 (strain CFT073 / ATCC 700928 / UPEC), this protein is ATP-dependent DNA helicase DinG.